The primary structure comprises 101 residues: Cysteine-rich PDZ-binding protein (101 aa).

Belongs to the CRIPT family. In terms of assembly, component of the minor spliceosome, which splices U12-type introns.

It localises to the cytoplasm. As a component of the minor spliceosome, involved in the splicing of U12-type introns in pre-mRNAs. In Ictalurus punctatus (Channel catfish), this protein is Cysteine-rich PDZ-binding protein (cript).